A 904-amino-acid polypeptide reads, in one-letter code: Alpha-actinin-4 (904 aa).

The segment at 1–27 is disordered; it reads MVDYHSAGQPYPYGGNGPGPNGDYMAQ. The tract at residues 1–259 is actin-binding; that stretch reads MVDYHSAGQP…IMTYVSSFYH (259 aa). Calponin-homology (CH) domains are found at residues 43–147 and 156–262; these read KQQR…LRFA and TSAK…HAFS. Spectrin repeat units lie at residues 286–396, 406–511, 521–632, and 642–745; these read HLME…WLLN, HLAE…ALEK, ELHL…ALQD, and RLRR…EVEN. 2 EF-hand domains span residues 758–793 and 799–834; these read EQMQ…LGYD and QGDA…ETTD. Residues aspartate 771, aspartate 773, glutamate 782, aspartate 812, asparagine 814, serine 816, and serine 818 each contribute to the Ca(2+) site.

It belongs to the alpha-actinin family. In terms of assembly, homodimer; antiparallel. Component of the CART complex. May interact with nuclear receptors.

It is found in the nucleus. The protein resides in the cytoplasm. Its subcellular location is the cell junction. It localises to the perinuclear region. F-actin cross-linking protein which is thought to anchor actin to a variety of intracellular structures. This is a bundling protein. Probably involved in vesicular trafficking via its association with the CART complex. Involved in tight junction assembly in epithelial cells. May also function as a transcriptional coactivator, stimulating transcription mediated by nuclear hormone receptors. The chain is Alpha-actinin-4 from Gallus gallus (Chicken).